A 721-amino-acid chain; its full sequence is YTH domain-containing protein 1 (721 aa).

Positions 29 to 38 (EADIAEELQD) are enriched in acidic residues. The segment at 29-239 (EADIAEELQD…GGGTHSHSQK (211 aa)) is disordered. Positions 48–75 (SESNGGDSSDSEPSISSVSTATSSLAGS) are enriched in low complexity. The span at 135–151 (ASDKVKSKSPDTEDRQP) shows a compositional bias: basic and acidic residues. Positions 254 to 391 (TRFFLIKSNN…KIGGELCRLF (138 aa)) constitute a YTH domain. RNA is bound by residues 260 to 262 (KSN), Trp276, and Trp327. Disordered regions lie at residues 424-471 (PPRS…RHHH), 580-605 (DGPGAPPLPDYPPPQRPPPPGFDKAP), and 651-721 (AGGG…DNRR). The segment covering 432–443 (GHGGGGRGGGRG) has biased composition (gly residues). The span at 451 to 471 (PMRHKRSYHGAPHHRPYRHHH) shows a compositional bias: basic residues. A compositionally biased stretch (pro residues) spans 583 to 600 (GAPPLPDYPPPQRPPPPG). Residues 651–670 (AGGGMGAGGGSGGGMGGPGG) show a composition bias toward gly residues. Residues 699-708 (RDSRPFRERG) are compositionally biased toward basic and acidic residues.

The protein resides in the nucleus. Functionally, regulator of alternative splicing that specifically recognizes and binds N6-methyladenosine (m6A)-containing RNAs. Acts by acting as a reader of m6A methylation. Required for sex determination and dosage compensation via Sxl alternative splicing: m6A methylation acts as a key regulator of Sxl pre-mRNA and promotes female-specific alternative splicing of Sxl, which determines female physiognomy. M6A methylation is also required for neuronal functions. The polypeptide is YTH domain-containing protein 1 (Drosophila melanogaster (Fruit fly)).